A 252-amino-acid polypeptide reads, in one-letter code: 5-oxoprolinase subunit A (252 aa).

Belongs to the LamB/PxpA family. In terms of assembly, forms a complex composed of PxpA, PxpB and PxpC.

It catalyses the reaction 5-oxo-L-proline + ATP + 2 H2O = L-glutamate + ADP + phosphate + H(+). Functionally, catalyzes the cleavage of 5-oxoproline to form L-glutamate coupled to the hydrolysis of ATP to ADP and inorganic phosphate. In Kocuria rhizophila (strain ATCC 9341 / DSM 348 / NBRC 103217 / DC2201), this protein is 5-oxoprolinase subunit A.